A 516-amino-acid polypeptide reads, in one-letter code: Solute carrier family 49 member A3 (516 aa).

The segment covering 1–10 (MAGTMDRLED) has biased composition (basic and acidic residues). The interval 1-22 (MAGTMDRLEDCNSPETSGTAGD) is disordered. Helical transmembrane passes span 34–54 (WVFL…WLSF), 74–94 (WLSL…IWVL), 104–124 (ILGA…CLPV), 139–159 (LCAL…ALWF), 170–190 (ISTM…PALV), 199–219 (MLGI…VCLW), 253–273 (VLLA…SALL), 289–309 (LCGA…GLYV), 321–341 (IGLC…QLQG), 344–364 (LALA…APVV), 382–402 (GLIF…LTAL), and 425–445 (VSLL…VIFF). The disordered stretch occupies residues 453 to 516 (EAESGGSSSP…EWAETMPRDV (64 aa)). Over residues 504–516 (GHSEWAETMPRDV) the composition is skewed to basic and acidic residues.

The protein belongs to the major facilitator superfamily.

The protein localises to the membrane. The sequence is that of Solute carrier family 49 member A3 (Slc49a3) from Mus musculus (Mouse).